Consider the following 574-residue polypeptide: Cell division cycle 7-related protein kinase (574 aa).

Ser27 carries the post-translational modification Phosphoserine. Positions 58–574 constitute a Protein kinase domain; the sequence is FKIEDKIGEG…LHPFFKDMSL (517 aa). Residues 64–72 and Lys90 contribute to the ATP site; that span reads IGEGTFSSV. Asp177 acts as the Proton acceptor in catalysis. Residue Lys268 forms a Glycyl lysine isopeptide (Lys-Gly) (interchain with G-Cter in SUMO2) linkage. Phosphothreonine is present on Thr503.

It belongs to the protein kinase superfamily. Ser/Thr protein kinase family. CDC7 subfamily. In terms of assembly, forms a complex with either DBF4/DBF4A or DBF4B, leading to the activation of the kinase activity. Interacts with CLASPIN (via the acidic patch); the interaction is required for phosphorylation of MCM proteins and CLASPIN. Mg(2+) is required as a cofactor.

The protein resides in the nucleus. It carries out the reaction L-seryl-[protein] + ATP = O-phospho-L-seryl-[protein] + ADP + H(+). The enzyme catalyses L-threonyl-[protein] + ATP = O-phospho-L-threonyl-[protein] + ADP + H(+). Kinase involved in initiation of DNA replication. Phosphorylates critical substrates that regulate the G1/S phase transition and initiation of DNA replication, such as MCM proteins and CLASPIN. The protein is Cell division cycle 7-related protein kinase of Homo sapiens (Human).